An 893-amino-acid chain; its full sequence is Beta-adaptin-like protein C (893 aa).

Residues 593 to 621 (TEDEDYVEGSETGYPEASGNPVDGAASPS) form a disordered region.

Belongs to the adaptor complexes large subunit family. As to quaternary structure, adaptor protein complexes are heterotetramers composed of two large adaptins (beta-type subunit and alpha-type or delta-type or epsilon-type or gamma-type subunit), a medium adaptin (mu-type subunit) and a small adaptin (sigma-type subunit).

It is found in the golgi apparatus. The protein localises to the trans-Golgi network. It localises to the cytoplasmic vesicle. The protein resides in the clathrin-coated vesicle membrane. Its function is as follows. Subunit of clathrin-associated adaptor protein complex that plays a role in protein sorting in the late-Golgi/trans-Golgi network (TGN) and/or endosomes. The AP complexes mediate both the recruitment of clathrin to membranes and the recognition of sorting signals within the cytosolic tails of transmembrane cargo molecules. In Arabidopsis thaliana (Mouse-ear cress), this protein is Beta-adaptin-like protein C (BETAC-AD).